The primary structure comprises 271 residues: Probable ribosomal RNA small subunit methyltransferase A (271 aa).

S-adenosyl-L-methionine is bound by residues leucine 12, glycine 37, glutamate 58, aspartate 83, and asparagine 100.

This sequence belongs to the class I-like SAM-binding methyltransferase superfamily. rRNA adenine N(6)-methyltransferase family. RsmA subfamily.

It localises to the cytoplasm. Its function is as follows. Specifically dimethylates two adjacent adenosines in the loop of a conserved hairpin near the 3'-end of 16S rRNA in the 30S particle. May play a critical role in biogenesis of 30S subunits. This Methanococcus aeolicus (strain ATCC BAA-1280 / DSM 17508 / OCM 812 / Nankai-3) protein is Probable ribosomal RNA small subunit methyltransferase A.